Here is a 545-residue protein sequence, read N- to C-terminus: CTP synthase (545 aa).

Residues 1–266 are amidoligase domain; that stretch reads MTKNYIFITG…DDYICNYFKL (266 aa). Ser14 is a binding site for CTP. A UTP-binding site is contributed by Ser14. Residues 15–20 and Asp72 contribute to the ATP site; that span reads SLGKGI. Residues Asp72 and Glu140 each contribute to the Mg(2+) site. CTP is bound by residues 147 to 149, 187 to 192, and Lys223; these read DIE and KTKPTQ. UTP is bound by residues 187–192 and Lys223; that span reads KTKPTQ. 239–241 provides a ligand contact to ATP; sequence KDV. The region spanning 291 to 543 is the Glutamine amidotransferase type-1 domain; it reads VIGIIGKYIK…IKSAGKHKKN (253 aa). Residue Gly352 coordinates L-glutamine. Cys379 serves as the catalytic Nucleophile; for glutamine hydrolysis. Residues 380 to 383, Glu403, and Arg471 each bind L-glutamine; that span reads LGMQ. Catalysis depends on residues His516 and Glu518.

This sequence belongs to the CTP synthase family. Homotetramer.

It carries out the reaction UTP + L-glutamine + ATP + H2O = CTP + L-glutamate + ADP + phosphate + 2 H(+). It catalyses the reaction L-glutamine + H2O = L-glutamate + NH4(+). The catalysed reaction is UTP + NH4(+) + ATP = CTP + ADP + phosphate + 2 H(+). It participates in pyrimidine metabolism; CTP biosynthesis via de novo pathway; CTP from UDP: step 2/2. Its activity is regulated as follows. Allosterically activated by GTP, when glutamine is the substrate; GTP has no effect on the reaction when ammonia is the substrate. The allosteric effector GTP functions by stabilizing the protein conformation that binds the tetrahedral intermediate(s) formed during glutamine hydrolysis. Inhibited by the product CTP, via allosteric rather than competitive inhibition. Catalyzes the ATP-dependent amination of UTP to CTP with either L-glutamine or ammonia as the source of nitrogen. Regulates intracellular CTP levels through interactions with the four ribonucleotide triphosphates. The protein is CTP synthase of Buchnera aphidicola subsp. Acyrthosiphon pisum (strain Tuc7).